The following is a 220-amino-acid chain: IQ domain-containing protein F3 (220 aa).

Positions 1 to 22 are enriched in basic and acidic residues; that stretch reads MELDQDQKVETPEAAENGKDEM. Positions 1–81 are disordered; the sequence is MELDQDQKVE…KQIQDEKTGI (81 aa). The segment covering 23 to 50 has biased composition (acidic residues); the sequence is QLEEQTQDEDTTETETETETETEAEAEG. Residues 69–93 are a coiled coil; it reads QAEKQIQDEKTGIKEADRAIQEQTQ. Positions 146-175 constitute an IQ domain; it reads AELAGVKIQAWWRGTLVRRTLLLAILSAWT.

The sequence is that of IQ domain-containing protein F3 (Iqcf3) from Rattus norvegicus (Rat).